Here is a 230-residue protein sequence, read N- to C-terminus: Cyclin-dependent kinase inhibitor rum1 (230 aa).

Disordered regions lie at residues 1-25, 43-118, and 188-230; these read MEPSTPPMRGLCTPSTPESPGSFKG, PESD…DGLY, and SRVP…NLLR. Thr13 bears the Phosphothreonine; by MAPK mark. Residue Ser19 is modified to Phosphoserine; by MAPK. Phosphothreonine; by cdc2 occurs at positions 58 and 62. The segment at 67 to 147 is CDK inhibitory and cyclin-binding; sequence LLPNLMLQDR…TFKPKLLFAD (81 aa). Positions 78 to 91 are enriched in basic and acidic residues; it reads NSLERCMEEDREHN. A compositionally biased stretch (polar residues) spans 93-102; the sequence is FLSSSDNQLL. The required for activity as a cdc2 kinase inhibitor stretch occupies residues 101–230; sequence LLSRKKRKPT…KDENRHNLLR (130 aa). Positions 188-199 are enriched in low complexity; the sequence is SRVPSSSSGSFV. Residues 219 to 230 show a composition bias toward basic and acidic residues; the sequence is NTKDENRHNLLR.

As to quaternary structure, interacts with cdc13, cig2 and pop1. Phosphorylated by cig1-associated cdc2 which leads to increased stability. Phosphorylation by MAPK reduces cdc2 kinase inhibitor ability.

Its subcellular location is the nucleus. Regulator of cell cycle G1 phase progression. Ensures the correct sequence of S phase and mitosis in the cell by acting as an inhibitor of the cdc2 mitotic kinase. Probably interacts with cdc2 to inhibit its action until the cell mass for Start is reached. Determines the length of the pre-Start G1 period and prevents mitosis from happening in early G1 cells. Required for maintaining pheromone-induced G1 arrest. Acts as an adapter protein since interaction with cdc13 promotes cyclin proteolysis during G1. Becomes a target for degradation at the G1/S phase transition, following phosphorylation by cig1-associated cdc2 at the G1/S phase transition. The polypeptide is Cyclin-dependent kinase inhibitor rum1 (rum1) (Schizosaccharomyces pombe (strain 972 / ATCC 24843) (Fission yeast)).